A 297-amino-acid chain; its full sequence is Cbb3-type cytochrome c oxidase subunit CcoP (297 aa).

Residues 1–35 lie on the Cytoplasmic side of the membrane; sequence MSKKPTTKKEVQTTGHSWDGIEELNTPLPRWWLWT. Residues 36–56 form a helical membrane-spanning segment; it reads FYATIVWGVAYSIAMPAWPIF. At 57–297 the chain is on the periplasmic side; sequence ASGATPGILG…SYVHSLGGGQ (241 aa). Cytochrome c domains are found at residues 108 to 199 and 206 to 294; these read YTRN…LKIS and ARAT…HSLG. Heme c-binding residues include C121, C124, H125, M174, C219, C222, H223, and M264.

This sequence belongs to the CcoP / FixP family. Component of the cbb3-type cytochrome c oxidase at least composed of CcoN, CcoO, CcoQ and CcoP. Interacts with CcoH (via transmembrane domain). Requires heme c as cofactor.

The protein resides in the cell inner membrane. Its pathway is energy metabolism; oxidative phosphorylation. Functionally, C-type cytochrome. Part of the cbb3-type cytochrome c oxidase complex. CcoP subunit is required for transferring electrons from donor cytochrome c via its heme groups to CcoO subunit. From there, electrons are shuttled to the catalytic binuclear center of CcoN subunit where oxygen reduction takes place. The complex also functions as a proton pump. In Rhodobacter capsulatus (strain ATCC BAA-309 / NBRC 16581 / SB1003), this protein is Cbb3-type cytochrome c oxidase subunit CcoP.